Reading from the N-terminus, the 160-residue chain is Transcription antitermination protein NusB (160 aa).

It belongs to the NusB family.

Functionally, involved in transcription antitermination. Required for transcription of ribosomal RNA (rRNA) genes. Binds specifically to the boxA antiterminator sequence of the ribosomal RNA (rrn) operons. The polypeptide is Transcription antitermination protein NusB (Sinorhizobium medicae (strain WSM419) (Ensifer medicae)).